Consider the following 223-residue polypeptide: Deoxyribose-phosphate aldolase (223 aa).

The Proton donor/acceptor role is filled by Asp89. Lys152 acts as the Schiff-base intermediate with acetaldehyde in catalysis. The active-site Proton donor/acceptor is Lys181.

The protein belongs to the DeoC/FbaB aldolase family. DeoC type 1 subfamily.

It localises to the cytoplasm. It carries out the reaction 2-deoxy-D-ribose 5-phosphate = D-glyceraldehyde 3-phosphate + acetaldehyde. Its pathway is carbohydrate degradation; 2-deoxy-D-ribose 1-phosphate degradation; D-glyceraldehyde 3-phosphate and acetaldehyde from 2-deoxy-alpha-D-ribose 1-phosphate: step 2/2. Catalyzes a reversible aldol reaction between acetaldehyde and D-glyceraldehyde 3-phosphate to generate 2-deoxy-D-ribose 5-phosphate. The chain is Deoxyribose-phosphate aldolase from Bacillus cereus (strain ATCC 10987 / NRS 248).